A 493-amino-acid polypeptide reads, in one-letter code: Tripartite motif-containing protein 5 (493 aa).

An N-acetylalanine modification is found at Ala2. Residues 15-59 (CPICLELLTQPLSLDCGHSFCQACLTANHKKSTLDKGERSCPVCR) form an RING-type zinc finger. Position 86 is a phosphoserine (Ser86). The B box-type zinc-finger motif lies at 90-132 (QKVDHCARHGEKLLLFCKEDGKVICWLCERSQEHRGHHTFLTE). Cys95, His98, Cys117, and His123 together coordinate Zn(2+). Positions 131 to 223 (TEEVAQKYQV…LTKSETEMVQ (93 aa)) form a coiled coil. The tract at residues 185–198 (FEQLRDILDWEESN) is required for interaction with GABARAP and for autophagy. The B30.2/SPRY domain occupies 281 to 493 (LKGMLEVFRE…VPMTLCSPSS (213 aa)).

This sequence belongs to the TRIM/RBCC family. In terms of assembly, can form homodimers and homotrimers. In addition to lower-order dimerization, also exhibits a higher-order multimerization and both low- and high-order multimerizations are essential for its restriction activity. Interacts with BTBD1 and BTBD2. Interacts with PSMC4, PSMC5, PSMD7 and HSPA8/HSC70. Interacts (via B30.2/SPRY domain) with HSPA1A/B. Interacts with PSMC2, MAP3K7/TAK1, TAB2 and TAB3. Interacts with SQSTM1. Interacts with TRIM6 and TRIM34. Interacts with ULK1 (phosphorylated form), GABARAP, GABARAPL1, GABARAPL2, MAP1LC3A, MAP1LC3C and BECN1. Degraded in a proteasome-independent fashion in the absence of viral infection but in a proteasome-dependent fashion following exposure to restriction sensitive virus. Post-translationally, autoubiquitinated in a RING finger- and UBE2D2-dependent manner. Monoubiquitinated by TRIM21. Deubiquitinated by Yersinia YopJ. Ubiquitination may not lead to proteasomal degradation.

Its subcellular location is the cytoplasm. The protein resides in the nucleus. It catalyses the reaction S-ubiquitinyl-[E2 ubiquitin-conjugating enzyme]-L-cysteine + [acceptor protein]-L-lysine = [E2 ubiquitin-conjugating enzyme]-L-cysteine + N(6)-ubiquitinyl-[acceptor protein]-L-lysine.. Its pathway is protein modification; protein ubiquitination. In terms of biological role, capsid-specific restriction factor that prevents infection from non-host-adapted retroviruses. Blocks viral replication early in the life cycle, after viral entry but before reverse transcription. In addition to acting as a capsid-specific restriction factor, also acts as a pattern recognition receptor that activates innate immune signaling in response to the retroviral capsid lattice. Binding to the viral capsid triggers its E3 ubiquitin ligase activity, and in concert with the heterodimeric ubiquitin conjugating enzyme complex UBE2V1-UBE2N (also known as UBC13-UEV1A complex) generates 'Lys-63'-linked polyubiquitin chains, which in turn are catalysts in the autophosphorylation of the MAP3K7/TAK1 complex (includes TAK1, TAB2, and TAB3). Activation of the MAP3K7/TAK1 complex by autophosphorylation results in the induction and expression of NF-kappa-B and MAPK-responsive inflammatory genes, thereby leading to an innate immune response in the infected cell. Plays a role in regulating autophagy through activation of autophagy regulator BECN1 by causing its dissociation from its inhibitors BCL2 and TAB2. The polypeptide is Tripartite motif-containing protein 5 (TRIM5) (Pongo pygmaeus (Bornean orangutan)).